The chain runs to 269 residues: MLREPMNQHDAPGPAETGADSDAETDAETDAETDAGAADDRYRLSHNSQIGTVLRDLAWQKCMLSVRTRTAHQFVTSILHVDPVNRTFVFDWCNAEPERMSLMTSEENAFSGLLRGVPVNFVVGQPAATRYDDGPAFVAEFPEKLYHFQRRRHFRARTLVTKGYRCEMSLPDKTVLGLDIADLSLSGVGLRSRTVTADHLPVGTTVAKCRLDFRELGKLELDMQVVGHWLVGRDDSAIHHFGCAFVNPDGRMENFLQRLVFALELAHRG.

Positions 1-42 (MLREPMNQHDAPGPAETGADSDAETDAETDAETDAGAADDRY) are disordered. The segment covering 19–33 (ADSDAETDAETDAET) has biased composition (acidic residues). The 113-residue stretch at 149–261 (QRRRHFRART…MENFLQRLVF (113 aa)) folds into the PilZ domain.

It belongs to the YcgR family. As to quaternary structure, monomer. Interacts with the flagellar basal bodies.

The protein resides in the bacterial flagellum basal body. Acts as a flagellar brake, regulating swimming and swarming in a bis-(3'-5') cyclic diguanylic acid (c-di-GMP)-dependent manner. Binds 1 c-di-GMP dimer per subunit. Increasing levels of c-di-GMP lead to decreased motility. In Cupriavidus taiwanensis (strain DSM 17343 / BCRC 17206 / CCUG 44338 / CIP 107171 / LMG 19424 / R1) (Ralstonia taiwanensis (strain LMG 19424)), this protein is Flagellar brake protein YcgR.